Here is a 121-residue protein sequence, read N- to C-terminus: Basic phospholipase A2 homolog 2 (121 aa).

Disulfide bonds link Cys-26/Cys-115, Cys-28/Cys-44, Cys-43/Cys-95, Cys-49/Cys-121, Cys-50/Cys-88, Cys-57/Cys-81, and Cys-75/Cys-86. The segment at 105–117 (KKYRYHLKPLCKK) is important for membrane-damaging activities in eukaryotes and bacteria; heparin-binding.

Belongs to the phospholipase A2 family. Group II subfamily. K49 sub-subfamily. As to quaternary structure, homodimer; non-covalently linked (probable alternative/compact dimer conformation in solution). As to expression, expressed by the venom gland.

The protein localises to the secreted. Functionally, snake venom phospholipase A2 homolog that lacks enzymatic activity. Is myotoxic and displays edema-inducing activities in mouse paw. Also displays cytotoxic activity against myotubes. A model of myotoxic mechanism has been proposed: an apo Lys49-PLA2 is activated by the entrance of a hydrophobic molecule (e.g. fatty acid) at the hydrophobic channel of the protein leading to a reorientation of a monomer. This reorientation causes a transition between 'inactive' to 'active' states, causing alignment of C-terminal and membrane-docking sites (MDoS) side-by-side and putting the membrane-disruption sites (MDiS) in the same plane, exposed to solvent and in a symmetric position for both monomers. The MDoS region stabilizes the toxin on membrane by the interaction of charged residues with phospholipid head groups. Subsequently, the MDiS region destabilizes the membrane with penetration of hydrophobic residues. This insertion causes a disorganization of the membrane, allowing an uncontrolled influx of ions (i.e. calcium and sodium), and eventually triggering irreversible intracellular alterations and cell death. The sequence is that of Basic phospholipase A2 homolog 2 from Bothrops brazili (Brazil's lancehead).